The following is a 161-amino-acid chain: Cytochrome c-type biogenesis protein CcmE (161 aa).

Residues 1–8 (MNPRRKKR) lie on the Cytoplasmic side of the membrane. Residues 9–29 (LGLILALFVGISATVGLMLYA) form a helical; Signal-anchor for type II membrane protein membrane-spanning segment. Residues 30–161 (LNQNMDLFYT…TEQQKQGTGQ (132 aa)) lie on the Periplasmic side of the membrane. Heme is bound by residues histidine 129 and tyrosine 133. The disordered stretch occupies residues 142–161 (MKKTHEPLQYTEQQKQGTGQ). The segment covering 151–161 (YTEQQKQGTGQ) has biased composition (polar residues).

Belongs to the CcmE/CycJ family.

It is found in the cell inner membrane. Its function is as follows. Heme chaperone required for the biogenesis of c-type cytochromes. Transiently binds heme delivered by CcmC and transfers the heme to apo-cytochromes in a process facilitated by CcmF and CcmH. This is Cytochrome c-type biogenesis protein CcmE from Aliivibrio fischeri (strain ATCC 700601 / ES114) (Vibrio fischeri).